Here is a 392-residue protein sequence, read N- to C-terminus: Acyl-CoA dehydrogenase IpdE1 (392 aa).

FAD is bound by residues 126 to 129 (QGYS) and S171. The Proton acceptor role is filled by E254. 371-373 (SNE) is a binding site for FAD.

The protein belongs to the acyl-CoA dehydrogenase family. Heterotetramer composed of 2 IpdE1 subunits and 2 IpdE2 subunits. Requires FAD as cofactor.

The enzyme catalyses 3-[(3aS,4S,5R,7aS)-5-hydroxy-7a-methyl-1-oxo-octahydro-1H-inden-4-yl]propanoyl-CoA + A = (2E)-3-[(3aS,4S,5R,7aS)-5-hydroxy-7a-methyl-1-oxo-octahydro-1H-inden-4-yl]prop-2-enoyl-CoA + AH2. Its pathway is steroid metabolism; cholesterol degradation. Its function is as follows. Involved in cholesterol degradation. Catalyzes the dehydrogenation of 5OH-HIP-CoA to 5OH-HIPE-CoA. The chain is Acyl-CoA dehydrogenase IpdE1 from Mycolicibacterium smegmatis (strain ATCC 700084 / mc(2)155) (Mycobacterium smegmatis).